A 168-amino-acid chain; its full sequence is Large ribosomal subunit protein bL17 (168 aa).

Residues 121–146 are compositionally biased toward basic and acidic residues; sequence AEAEGGEEKAEQKTEKKAAKAKEPKA. A disordered region spans residues 121–168; it reads AEAEGGEEKAEQKTEKKAAKAKEPKAAKAPKKAAAKPKAKAEKKGAEE. Positions 148–158 are enriched in basic residues; it reads KAPKKAAAKPK. Basic and acidic residues predominate over residues 159–168; that stretch reads AKAEKKGAEE.

This sequence belongs to the bacterial ribosomal protein bL17 family. As to quaternary structure, part of the 50S ribosomal subunit. Contacts protein L32.

This Anaeromyxobacter sp. (strain Fw109-5) protein is Large ribosomal subunit protein bL17.